Reading from the N-terminus, the 183-residue chain is Ribosome maturation factor RimP (183 aa).

Belongs to the RimP family.

It localises to the cytoplasm. In terms of biological role, required for maturation of 30S ribosomal subunits. This is Ribosome maturation factor RimP from Leptothrix cholodnii (strain ATCC 51168 / LMG 8142 / SP-6) (Leptothrix discophora (strain SP-6)).